Here is a 257-residue protein sequence, read N- to C-terminus: UPF0246 protein LPC_0782 (257 aa).

This sequence belongs to the UPF0246 family.

In Legionella pneumophila (strain Corby), this protein is UPF0246 protein LPC_0782.